The sequence spans 213 residues: Small ribosomal subunit protein uS3 (213 aa).

Residues 38–106 enclose the KH type-2 domain; sequence IREYLENRLS…RVHINIVEIK (69 aa).

It belongs to the universal ribosomal protein uS3 family. In terms of assembly, part of the 30S ribosomal subunit. Forms a tight complex with proteins S10 and S14.

Functionally, binds the lower part of the 30S subunit head. Binds mRNA in the 70S ribosome, positioning it for translation. In Oceanobacillus iheyensis (strain DSM 14371 / CIP 107618 / JCM 11309 / KCTC 3954 / HTE831), this protein is Small ribosomal subunit protein uS3.